A 412-amino-acid polypeptide reads, in one-letter code: Exodeoxyribonuclease 7 large subunit (412 aa).

This sequence belongs to the XseA family. As to quaternary structure, heterooligomer composed of large and small subunits.

It localises to the cytoplasm. It carries out the reaction Exonucleolytic cleavage in either 5'- to 3'- or 3'- to 5'-direction to yield nucleoside 5'-phosphates.. Bidirectionally degrades single-stranded DNA into large acid-insoluble oligonucleotides, which are then degraded further into small acid-soluble oligonucleotides. This chain is Exodeoxyribonuclease 7 large subunit, found in Nostoc sp. (strain PCC 7120 / SAG 25.82 / UTEX 2576).